Consider the following 106-residue polypeptide: Large ribosomal subunit protein bL21 (106 aa).

It belongs to the bacterial ribosomal protein bL21 family. In terms of assembly, part of the 50S ribosomal subunit. Contacts protein L20.

This protein binds to 23S rRNA in the presence of protein L20. This is Large ribosomal subunit protein bL21 from Xanthomonas campestris pv. campestris (strain ATCC 33913 / DSM 3586 / NCPPB 528 / LMG 568 / P 25).